The sequence spans 1054 residues: Putative disease resistance RPP13-like protein 1 (1054 aa).

Leucine-zipper regions lie at residues 9-20 (LAAFLQALFQTL) and 39-53 (LERL…TAVL). Residues 117–147 (DFLDGNSEHLETRLEKVTIRLERLASQRNIL) adopt a coiled-coil conformation. Residues 152-462 (LTAMIPKQRL…AEGFLQQTRS (311 aa)) enclose the NB-ARC domain. 203–210 (GIGGVGKT) provides a ligand contact to ATP. LRR repeat units lie at residues 579-600 (RLRV…FFKN), 603-624 (HARF…LCYM), 626-648 (NLQT…ISNL), 650-672 (NLRY…GRLK), and 676-697 (TLTT…GGLH). The segment at 1018-1054 (PQYHHPQFHLPRSNVSGSPKSHGSHRSYDSRSSSRYD) is disordered. Positions 1043–1054 (RSYDSRSSSRYD) are enriched in basic and acidic residues.

It belongs to the disease resistance NB-LRR family. RPP13 subfamily.

Functionally, potential disease resistance protein. In Arabidopsis thaliana (Mouse-ear cress), this protein is Putative disease resistance RPP13-like protein 1 (RPPL1).